The primary structure comprises 515 residues: Slowpoke-binding protein (515 aa).

The interval 1–31 (MFKFNKAAQQQRIDNRNSAVTGHDPFVRPPV) is disordered. Positions 7-20 (AAQQQRIDNRNSAV) are enriched in polar residues. A phosphoserine mark is found at Ser-54 and Ser-79. Over residues 73 to 82 (SSNRSASSEQ) the composition is skewed to polar residues. The interval 73-94 (SSNRSASSEQDNSDLSEHSEKS) is disordered. Residues 191 to 203 (NWFLVTDASVRTD) are interaction with Slo. Residues 483–503 (SLSEANSPCTPPSTPHDRRTG) are disordered.

In terms of assembly, interacts specifically with Slo; which activates Slo activity. Interacts with 14-3-3-zeta when phosphorylated. Forms a heterotetrameric complex containing phosphorylated Slob, Slo and 14-3-3-zeta, which represses Slo activity due to the indirect interaction between Slo and 14-3-3-zeta. In terms of processing, phosphorylated. Phosphorylation of Ser-54 and Ser-79 is required for the interaction with 14-3-3-zeta but not with that of Slo. Expressed in head. In larval brain, it is expressed in the mushroom body. Also expressed in larval muscles.

Its subcellular location is the cytoplasm. Functionally, regulator of calcium-activated channel Slo. Increases or decreases the voltage sensitivity of Slo, depending on the absence or presence of 14-3-3-zeta in the complex, respectively. The protein is Slowpoke-binding protein (Slob) of Drosophila melanogaster (Fruit fly).